The chain runs to 233 residues: Ribonuclease HII (233 aa).

One can recognise an RNase H type-2 domain in the interval 26-215 (QLVAGIDEVG…VRASEGEGLE (190 aa)). A divalent metal cation is bound by residues D32, E33, and D124. Residues 211 to 233 (GEGLETAAGRQSSEGKKGRRPRG) form a disordered region.

The protein belongs to the RNase HII family. Requires Mn(2+) as cofactor. Mg(2+) is required as a cofactor.

Its subcellular location is the cytoplasm. The catalysed reaction is Endonucleolytic cleavage to 5'-phosphomonoester.. Its function is as follows. Endonuclease that specifically degrades the RNA of RNA-DNA hybrids. In Syntrophobacter fumaroxidans (strain DSM 10017 / MPOB), this protein is Ribonuclease HII.